A 777-amino-acid polypeptide reads, in one-letter code: Disintegrin and metalloproteinase domain-containing protein 5 (777 aa).

Residues 1–16 (MFLVLVLLTGLGRLYA) form the signal peptide. The propeptide occupies 17-142 (GNNPRKTFVQ…VLSGFTHMIY (126 aa)). At 17–706 (GNNPRKTFVQ…RGYVVLSTKR (690 aa)) the chain is on the extracellular side. N-linked (GlcNAc...) asparagine glycans are attached at residues Asn49 and Asn123. A Peptidase M12B domain is found at 185-382 (RYIDMYIVVN…YGLTCLRNTS (198 aa)). 4 disulfide bridges follow: Cys294/Cys377, Cys336/Cys361, Cys338/Cys343, and Cys456/Cys477. The 90-residue stretch at 396–485 (RRICGNSIRE…DCVHDTYAQN (90 aa)) folds into the Disintegrin domain. An N-linked (GlcNAc...) asparagine glycan is attached at Asn566. Residues 633–667 (NNGSCNAEIHCQGRGICNNLDNCHCHKGFVPPECA) enclose the EGF-like domain. Intrachain disulfides connect Cys637–Cys649, Cys643–Cys655, and Cys657–Cys666. A helical membrane pass occupies residues 707 to 727 (FQLIFYIGIPVIIIVAAILIK). The Cytoplasmic portion of the chain corresponds to 728-777 (QNQLGKLFCRGEKEHMSSVSEDGSRSVTLSATESKFPADTEHSNKEEDAQ). Polar residues predominate over residues 744–760 (SSVSEDGSRSVTLSATE). Residues 744-777 (SSVSEDGSRSVTLSATESKFPADTEHSNKEEDAQ) are disordered. Basic and acidic residues predominate over residues 763–777 (FPADTEHSNKEEDAQ).

Interacts with TEX101. Subject to proteolytic processing during epididymal transit of spermatozoa. Detected in testis.

The protein resides in the membrane. Functionally, this is a non catalytic metalloprotease-like protein. May play a role in sperm-egg fusion. The protein is Disintegrin and metalloproteinase domain-containing protein 5 (ADAM5) of Cavia porcellus (Guinea pig).